Consider the following 151-residue polypeptide: Large ribosomal subunit protein bL9 (151 aa).

Belongs to the bacterial ribosomal protein bL9 family.

Binds to the 23S rRNA. This Lactobacillus helveticus (strain DPC 4571) protein is Large ribosomal subunit protein bL9.